The following is a 142-amino-acid chain: Hemoglobin F-I (142 aa).

The region spanning 2-142 (GLTTAQIKAI…AAGVLVAAMK (141 aa)) is the Globin domain. His-95 contributes to the heme b binding site.

The protein belongs to the globin family. In terms of assembly, homotetramer.

Functionally, hemoglobin F-I appears to function in storage, rather than transport of oxygen. The polypeptide is Hemoglobin F-I (Urechis caupo (Innkeeper worm)).